Here is a 461-residue protein sequence, read N- to C-terminus: UDP-N-acetylmuramoylalanine--D-glutamate ligase (461 aa).

117 to 123 (GTNGKTT) contributes to the ATP binding site.

It belongs to the MurCDEF family.

It localises to the cytoplasm. The catalysed reaction is UDP-N-acetyl-alpha-D-muramoyl-L-alanine + D-glutamate + ATP = UDP-N-acetyl-alpha-D-muramoyl-L-alanyl-D-glutamate + ADP + phosphate + H(+). Its pathway is cell wall biogenesis; peptidoglycan biosynthesis. Its function is as follows. Cell wall formation. Catalyzes the addition of glutamate to the nucleotide precursor UDP-N-acetylmuramoyl-L-alanine (UMA). In Synechococcus sp. (strain CC9605), this protein is UDP-N-acetylmuramoylalanine--D-glutamate ligase.